A 100-amino-acid chain; its full sequence is Putative exopolysaccharide production repressor protein y4xQ (100 aa).

A run of 2 helical transmembrane segments spans residues 9 to 29 (ILWL…GSIS) and 35 to 55 (TMVG…FLLW). Positions 66-100 (TTGQFHGEEQPGDPRIAGTHGRTDGDPCFEDEDSR) are disordered.

The protein to Rhizobium exopolysaccharide production repressor protein (ExoX).

It is found in the cell membrane. Could be involved in the inhibition of exopolysaccharide synthesis (EPS) and nodulation ability (nod). The chain is Putative exopolysaccharide production repressor protein y4xQ from Sinorhizobium fredii (strain NBRC 101917 / NGR234).